We begin with the raw amino-acid sequence, 146 residues long: uncharacterized protein (146 aa).

An N-terminal signal peptide occupies residues M1–S24. N-linked (GlcNAc...) asparagine glycans are attached at residues N99 and N106.

This is an uncharacterized protein from Saccharomyces cerevisiae (strain ATCC 204508 / S288c) (Baker's yeast).